Here is a 205-residue protein sequence, read N- to C-terminus: Large ribosomal subunit protein uL4 (205 aa).

It belongs to the universal ribosomal protein uL4 family. As to quaternary structure, part of the 50S ribosomal subunit.

One of the primary rRNA binding proteins, this protein initially binds near the 5'-end of the 23S rRNA. It is important during the early stages of 50S assembly. It makes multiple contacts with different domains of the 23S rRNA in the assembled 50S subunit and ribosome. In terms of biological role, forms part of the polypeptide exit tunnel. This Thermus thermophilus (strain ATCC BAA-163 / DSM 7039 / HB27) protein is Large ribosomal subunit protein uL4.